We begin with the raw amino-acid sequence, 222 residues long: Countin-3 (222 aa).

Positions 1–20 (MNKILSLFLITILLISKVMS) are cleaved as a signal peptide. The 85-residue stretch at 21–105 (SSEECKLCTD…ESVKMCQYND (85 aa)) folds into the Saposin B-type domain. Cystine bridges form between Cys25–Cys101, Cys28–Cys95, and Cys56–Cys68. 3 N-linked (GlcNAc...) asparagine glycosylation sites follow: Asn108, Asn134, and Asn218.

This sequence belongs to the countin family.

The protein resides in the secreted. May control the size of the multicellular structure. The protein is Countin-3 (ctnC) of Dictyostelium discoideum (Social amoeba).